Here is a 337-residue protein sequence, read N- to C-terminus: Ribonucleoside-diphosphate reductase small chain (337 aa).

Fe cation contacts are provided by Asp-85, Glu-116, and His-119. Residue Tyr-123 is part of the active site. Fe cation is bound by residues Glu-178, Glu-212, and His-215.

Belongs to the ribonucleoside diphosphate reductase small chain family. As to quaternary structure, heterodimer of a large and a small subunit. The cofactor is Fe cation.

The enzyme catalyses a 2'-deoxyribonucleoside 5'-diphosphate + [thioredoxin]-disulfide + H2O = a ribonucleoside 5'-diphosphate + [thioredoxin]-dithiol. In terms of biological role, provides the precursors necessary for DNA synthesis. Catalyzes the biosynthesis of deoxyribonucleotides from the corresponding ribonucleotides. The protein is Ribonucleoside-diphosphate reductase small chain (RNR2) of Trypanosoma brucei brucei.